Here is a 463-residue protein sequence, read N- to C-terminus: MAQVSINRDLGEWGLSTDSGERARLLQSPSVDIAPKSEGEAPPGGVGGGTTSTLGAIFIVVNACLGAGLLNFPAAFSTAGGVAAGITLQMAMLVFIISGLVILAYCSQASNERTYQEVVWAVCGKLTGVLCEVAIATYTFGTCIAFLIIIGDQQDKIIAVMAKEPEGPGGSPWYTDRKFTISLTAFLFILPLSIPREIGFQKYASFLSVVGTWYVTAIIIIKYIWPDKEMTPADILNRPASWIAVFNAMPTICFGFQCHVSSVPVFNSMRQPEVKTWGGVVTAAMVIALAVYMGTGICGFLTFGDAVDPDVLLSYPSEDMAVAVARAFIILSVLTSYPILHFCGRAVIEGLWLRYQGMPVEEDVGRERRRRVLQTLVWFLLTLLLALFIPDIGKVISVIGGLAACFIFVFPGLCLIQAKLSEMEEVKPASWWAMVSYGVLLVTLGAFIFGQTTANAIFVDLLA.

Serine 28 bears the Phosphoserine mark. 11 helical membrane-spanning segments follow: residues alanine 56–phenylalanine 76, valine 82–isoleucine 102, leucine 130–isoleucine 150, phenylalanine 179–glycine 199, phenylalanine 206–proline 226, alanine 240–valine 260, alanine 283–phenylalanine 303, methionine 320–leucine 340, valine 372–isoleucine 392, isoleucine 396–isoleucine 416, and alanine 429–phenylalanine 449.

This sequence belongs to the amino acid/polyamine transporter 2 family. Interacts with the mTORC1 complex; this interaction mediates the recruitment of mTORC1 to the lysosome and its subsequent activation.

It is found in the lysosome membrane. The protein resides in the cell projection. Its subcellular location is the axon. It catalyses the reaction L-asparagine(in) + Na(+)(in) = L-asparagine(out) + Na(+)(out). The catalysed reaction is L-glutamine(in) + Na(+)(in) = L-glutamine(out) + Na(+)(out). Its function is as follows. Symporter that selectively cotransports sodium ions and amino acids, such as L-glutamine and L-asparagine from the lysosome into the cytoplasm and may participates in mTORC1 activation. The transport activity requires an acidic lysosomal lumen. This chain is Sodium-coupled neutral amino acid transporter 7, found in Bos taurus (Bovine).